Consider the following 134-residue polypeptide: Retinol-binding protein 2 (134 aa).

Positions 41 and 109 each coordinate all-trans-retinol.

Belongs to the calycin superfamily. Fatty-acid binding protein (FABP) family.

The protein resides in the cytoplasm. Intracellular transport of retinol. This chain is Retinol-binding protein 2 (RBP2), found in Sus scrofa (Pig).